A 393-amino-acid chain; its full sequence is Protein TsgA homolog (393 aa).

The next 12 helical transmembrane spans lie at 11–31 (WISF…GMVM), 51–71 (FLNA…EIIP), 78–98 (FGFV…SLAL), 101–121 (AAMF…TFLI), 134–154 (LLFT…VAAY), 162–182 (WYWV…LTFG), 206–226 (IGVL…LGFI), 245–265 (TLVS…SFIL), 273–293 (ILTV…KAQP), 297–317 (AWFI…IITL), 332–352 (FVLT…GPIV), and 361–381 (LLTA…LGFV).

This sequence belongs to the major facilitator superfamily. TsgA family.

The protein localises to the cell inner membrane. In Citrobacter koseri (strain ATCC BAA-895 / CDC 4225-83 / SGSC4696), this protein is Protein TsgA homolog.